A 523-amino-acid chain; its full sequence is GMP synthase [glutamine-hydrolyzing] (523 aa).

Positions 8-205 (KILILDFGSQ…VVGICGCECK (198 aa)) constitute a Glutamine amidotransferase type-1 domain. Cys-85 functions as the Nucleophile in the catalytic mechanism. Active-site residues include His-179 and Glu-181. Residues 206–398 (WTAENIIEDA…LGLPAEMLNR (193 aa)) enclose the GMPS ATP-PPase domain. Position 233–239 (233–239 (SGGVDSS)) interacts with ATP.

In terms of assembly, homodimer.

It carries out the reaction XMP + L-glutamine + ATP + H2O = GMP + L-glutamate + AMP + diphosphate + 2 H(+). The protein operates within purine metabolism; GMP biosynthesis; GMP from XMP (L-Gln route): step 1/1. Functionally, catalyzes the synthesis of GMP from XMP. The protein is GMP synthase [glutamine-hydrolyzing] of Actinobacillus pleuropneumoniae serotype 3 (strain JL03).